Reading from the N-terminus, the 184-residue chain is Dual specificity protein phosphatase 22 (184 aa).

Residue glycine 2 is the site of N-myristoyl glycine attachment. Residues 4 to 144 form the Tyrosine-protein phosphatase domain; the sequence is GMSQILPGLY…LQEFEKHEVH (141 aa). Residue cysteine 88 is the Phosphocysteine intermediate of the active site. Leucine 89, alanine 90, valine 92, serine 93, and arginine 94 together coordinate a protein.

This sequence belongs to the protein-tyrosine phosphatase family. Non-receptor class dual specificity subfamily. As to quaternary structure, monomer. Interacts with LCK; the interaction is direct. Interacts with UBR2; the interaction is direct. Post-translationally, myristoylation regulates subcellular location, and is necessary for activation of JNK.

The protein localises to the cytoplasm. It carries out the reaction O-phospho-L-tyrosyl-[protein] + H2O = L-tyrosyl-[protein] + phosphate. The catalysed reaction is O-phospho-L-seryl-[protein] + H2O = L-seryl-[protein] + phosphate. It catalyses the reaction O-phospho-L-threonyl-[protein] + H2O = L-threonyl-[protein] + phosphate. In terms of biological role, dual specificity phosphatase; can dephosphorylate both phosphotyrosine and phosphoserine or phosphothreonine residues. Activates the JNK signaling pathway. Inhibits T-cell receptor signaling and T-cell mediated immune responses, acting, at least in part, by inducing degradation of E3 ubiquitin ligase UBR2. Dephosphorylates and thereby induces 'Lys-48'-linked ubiquitination of UBR2, leading to proteasomal degradation of UBR2. Dephosphorylates and thereby inactivates tyrosine kinase LCK. Inhibits UBR2-mediated 'Lys-63'-linked ubiquitination of LCK. May play a role in B-cell receptor (BCR) signaling and B-cell function. This chain is Dual specificity protein phosphatase 22 (Dusp22), found in Mus musculus (Mouse).